We begin with the raw amino-acid sequence, 228 residues long: Small ribosomal subunit protein uS10m (228 aa).

Residues 1–17 (MKRYMFGTLPRVQPKRC) constitute a mitochondrion transit peptide.

The protein belongs to the universal ribosomal protein uS10 family. As to quaternary structure, component of the mitochondrial small ribosomal subunit (mt-SSU). Mature yeast 74S mitochondrial ribosomes consist of a small (37S) and a large (54S) subunit. The 37S small subunit contains a 15S ribosomal RNA (15S mt-rRNA) and at least 32 different proteins. The 54S large subunit contains a 21S rRNA (21S mt-rRNA) and at least 45 different proteins.

It localises to the mitochondrion. Component of the mitochondrial ribosome (mitoribosome), a dedicated translation machinery responsible for the synthesis of mitochondrial genome-encoded proteins, including at least some of the essential transmembrane subunits of the mitochondrial respiratory chain. The mitoribosomes are attached to the mitochondrial inner membrane and translation products are cotranslationally integrated into the membrane. The chain is Small ribosomal subunit protein uS10m (rsm10) from Schizosaccharomyces pombe (strain 972 / ATCC 24843) (Fission yeast).